The following is a 439-amino-acid chain: Coiled-coil domain-containing protein 166 (439 aa).

The segment at Met1 to Ser28 is disordered. Residues Pro9–Ala23 are compositionally biased toward low complexity. Coiled coils occupy residues Leu27–Arg74 and Asp121–Leu213. The disordered stretch occupies residues Pro276–Ala439. Polar residues predominate over residues Val338–Arg365. Low complexity-rich tracts occupy residues Ser376–Ser392 and Ala428–Ala439.

This chain is Coiled-coil domain-containing protein 166 (CCDC166), found in Homo sapiens (Human).